A 419-amino-acid chain; its full sequence is L-rhamnose isomerase (419 aa).

3 residues coordinate Mn(2+): H262, D294, and D296.

The protein belongs to the rhamnose isomerase family. In terms of assembly, homotetramer. The cofactor is Mn(2+).

The protein resides in the cytoplasm. It carries out the reaction L-rhamnopyranose = L-rhamnulose. It functions in the pathway carbohydrate degradation; L-rhamnose degradation; glycerone phosphate from L-rhamnose: step 1/3. Its function is as follows. Catalyzes the interconversion of L-rhamnose and L-rhamnulose. This is L-rhamnose isomerase from Shigella boydii serotype 4 (strain Sb227).